The chain runs to 449 residues: Xylose isomerase (449 aa).

Active-site residues include histidine 103 and aspartate 106. The Mg(2+) site is built by glutamate 234, glutamate 270, histidine 273, aspartate 298, aspartate 309, aspartate 311, and aspartate 342.

It belongs to the xylose isomerase family. In terms of assembly, homotetramer. Requires Mg(2+) as cofactor.

Its subcellular location is the cytoplasm. The catalysed reaction is alpha-D-xylose = alpha-D-xylulofuranose. The chain is Xylose isomerase from Levilactobacillus brevis (strain ATCC 367 / BCRC 12310 / CIP 105137 / JCM 1170 / LMG 11437 / NCIMB 947 / NCTC 947) (Lactobacillus brevis).